The sequence spans 351 residues: MVSTLDDTKRNAIAEKLADAKLLQELIIENQERFLRESTDNEISNRIRDFLEDDRKNLGIIETVIVQYGIQKEPRQTVREMVDQVRQLMQGSQLNFFEKVAQHELLKHKQVMSGLLVHKAAQKVGADVLAAIGPLNTVNFENRAHQEQLKGILEILGVRELTGQDADQGIWGRVQDAIAAFSGAVGSAVTQGSDKQDMNIQDVIRMDHNKVNILFTELQQSNDPQKIQEYFGQIYKDLTAHAEAEEEVLYPRVRSFYGEGDTQELYDEQSEMKRLLEQIKAISPSAPEFKDRVRQLADIVMDHVRQEESTLFAAIRNNLSSEQTEQWATEFKAAKSKIQQRLGGQATGAGV.

Fe cation contacts are provided by histidine 241, glutamate 245, and histidine 303.

Its function is as follows. Acts as a DNA nickase. The protein is DNA nickase of Nostoc sp. (strain PCC 7120 / SAG 25.82 / UTEX 2576).